Consider the following 444-residue polypeptide: Ribulose bisphosphate carboxylase (444 aa).

Lys163 (proton acceptor) is an active-site residue. A substrate-binding site is contributed by Lys165. Residues Lys189, Asp191, and Glu192 each coordinate Mg(2+). Position 189 is an N6-carboxylysine (Lys189). The active-site Proton acceptor is the His281. Substrate-binding positions include Arg282, His314, 367 to 369, and 389 to 392; these read SGG and QLGG.

Belongs to the RuBisCO large chain family. Type III subfamily. Homodimer or homodecamer. In contrast to form I RuBisCO, the form III RuBisCO is composed solely of large subunits. The cofactor is Mg(2+).

The catalysed reaction is 2 (2R)-3-phosphoglycerate + 2 H(+) = D-ribulose 1,5-bisphosphate + CO2 + H2O. It carries out the reaction D-ribulose 1,5-bisphosphate + O2 = 2-phosphoglycolate + (2R)-3-phosphoglycerate + 2 H(+). Functionally, catalyzes the addition of molecular CO(2) and H(2)O to ribulose 1,5-bisphosphate (RuBP), generating two molecules of 3-phosphoglycerate (3-PGA). Functions in an archaeal AMP degradation pathway, together with AMP phosphorylase and R15P isomerase. The protein is Ribulose bisphosphate carboxylase of Thermococcus onnurineus (strain NA1).